We begin with the raw amino-acid sequence, 401 residues long: NADH-quinone oxidoreductase subunit D 2 (401 aa).

The protein belongs to the complex I 49 kDa subunit family. As to quaternary structure, NDH-1 is composed of 14 different subunits. Subunits NuoB, C, D, E, F, and G constitute the peripheral sector of the complex.

The protein localises to the cell inner membrane. It carries out the reaction a quinone + NADH + 5 H(+)(in) = a quinol + NAD(+) + 4 H(+)(out). In terms of biological role, NDH-1 shuttles electrons from NADH, via FMN and iron-sulfur (Fe-S) centers, to quinones in the respiratory chain. The immediate electron acceptor for the enzyme in this species is believed to be ubiquinone. Couples the redox reaction to proton translocation (for every two electrons transferred, four hydrogen ions are translocated across the cytoplasmic membrane), and thus conserves the redox energy in a proton gradient. The sequence is that of NADH-quinone oxidoreductase subunit D 2 from Koribacter versatilis (strain Ellin345).